Consider the following 571-residue polypeptide: RNA polymerase sigma factor SigA (571 aa).

Residues 321–391 (MVESNLRLVI…TRAIADQART (71 aa)) form a sigma-70 factor domain-2 region. The Interaction with polymerase core subunit RpoC motif lies at 345–348 (DLIQ). A sigma-70 factor domain-3 region spans residues 400–476 (ETINKVLRGA…DTAVESPAEA (77 aa)). Residues 489 to 542 (VLKTLTDRERFVLIHRFGLLDGRPKTLEEVGSAFNVTRERIRQIEAKALRKMRH) form a sigma-70 factor domain-4 region. The H-T-H motif DNA-binding region spans 515–534 (LEEVGSAFNVTRERIRQIEA).

This sequence belongs to the sigma-70 factor family. RpoD/SigA subfamily. As to quaternary structure, interacts transiently with the RNA polymerase catalytic core.

It is found in the cytoplasm. Functionally, sigma factors are initiation factors that promote the attachment of RNA polymerase to specific initiation sites and are then released. This sigma factor is the primary sigma factor during exponential growth. The sequence is that of RNA polymerase sigma factor SigA from Chlamydia muridarum (strain MoPn / Nigg).